We begin with the raw amino-acid sequence, 103 residues long: MIVTTTSTIQGKEIIDYVDIVNGEAIMGANIVRDLFASVRDVVGGRSGAYESKLKEARDIAMEEMKTLARQKNANAIVGIDVDYEVVREGMLMVAVSGTAVRI.

The protein belongs to the UPF0145 family.

The sequence is that of UPF0145 protein BC_5181 from Bacillus cereus (strain ATCC 14579 / DSM 31 / CCUG 7414 / JCM 2152 / NBRC 15305 / NCIMB 9373 / NCTC 2599 / NRRL B-3711).